Here is a 67-residue protein sequence, read N- to C-terminus: MSYTLKNTTPMSVTMNYLHHHCVRIGEVPIHDCHIFLLLIHNNVVTVNITSDSIALVVTSEVSHNLP.

This is an uncharacterized protein from Acidianus sp. F28 (AFV-2).